Consider the following 186-residue polypeptide: MTLLVGLGNPTLRYAHTRHNAGFDILDSLVSELDLSFTFSPKHNACLCVYKDFILLKPQTYMNLSGESVLSTKNFYKPKELLIVHDDLDLPLGVVRFKNGGGNGGHNGLKSIDLLCSNSYYRLRVGISKGIGVIEHVLSKFHKNEEPLKNAVFEHAKNALKFFIESHDFNAMQNRFTLKKPLKIES.

Tyr14 provides a ligand contact to tRNA. His19 (proton acceptor) is an active-site residue. The tRNA site is built by Tyr61, Asn63, and Asn107.

This sequence belongs to the PTH family. Monomer.

It localises to the cytoplasm. The catalysed reaction is an N-acyl-L-alpha-aminoacyl-tRNA + H2O = an N-acyl-L-amino acid + a tRNA + H(+). In terms of biological role, hydrolyzes ribosome-free peptidyl-tRNAs (with 1 or more amino acids incorporated), which drop off the ribosome during protein synthesis, or as a result of ribosome stalling. Catalyzes the release of premature peptidyl moieties from peptidyl-tRNA molecules trapped in stalled 50S ribosomal subunits, and thus maintains levels of free tRNAs and 50S ribosomes. This chain is Peptidyl-tRNA hydrolase, found in Helicobacter pylori (strain HPAG1).